The sequence spans 78 residues: Probable [Fe-S]-dependent transcriptional repressor (78 aa).

Iron-sulfur cluster is bound by residues C56, C61, C64, and C70.

This sequence belongs to the FeoC family.

In terms of biological role, may function as a transcriptional regulator that controls feoABC expression. In Escherichia coli O9:H4 (strain HS), this protein is Probable [Fe-S]-dependent transcriptional repressor.